The primary structure comprises 65 residues: uncharacterized protein (65 aa).

The Cytoplasmic portion of the chain corresponds to 1–20 (MRFSNCFNKFKFCIGTEKKY). Residues 21-43 (SFPICTSTYTSFSLFACIWSIFI) traverse the membrane as a helical segment. At 44 to 65 (HISLNKSFIYQKSWYYSFFQNR) the chain is on the extracellular side.

It is found in the host membrane. This is an uncharacterized protein from Acidianus sp. F28 (AFV-2).